Reading from the N-terminus, the 156-residue chain is uncharacterized protein (156 aa).

An N-terminal signal peptide occupies residues 1-27 (MKLLVLRLILIISTIFVLLNLSCMVNG). 5 N-linked (GlcNAc...) asparagine glycosylation sites follow: N20, N83, N103, N106, and N134.

It localises to the secreted. This is an uncharacterized protein from Dictyostelium discoideum (Social amoeba).